The chain runs to 1205 residues: ATP-dependent DNA helicase MER3 homolog (1205 aa).

The 196-residue stretch at 41-236 (PACFLSDVNM…WLAVPSEGIK (196 aa)) folds into the Helicase ATP-binding domain. Position 54–61 (54–61 (APTGSGKT)) interacts with ATP. The DEAH box signature appears at 172–175 (DEVH). The Helicase C-terminal domain maps to 266–467 (RLQSFIFDIL…CAVEHLNAEI (202 aa)). The SEC63 domain occupies 541 to 852 (PLEPGRLMTK…FEEYVGLDIH (312 aa)). Polar residues predominate over residues 1075 to 1091 (QKSEILNRTQGKNSTQL). Residues 1075 to 1131 (QKSEILNRTQGKNSTQLAGKKAFEKSKTPDENSLHFVGKRDSSSEKSKALSKTPDEN) are disordered. A compositionally biased stretch (basic and acidic residues) spans 1095 to 1122 (KAFEKSKTPDENSLHFVGKRDSSSEKSK).

It belongs to the helicase family. SKI2 subfamily. Transcribed preferentially in early stages of meiocyte development and during meiosis in young flowers.

The protein resides in the nucleus. The protein localises to the chromosome. The catalysed reaction is Couples ATP hydrolysis with the unwinding of duplex DNA by translocating in the 3'-5' direction.. It carries out the reaction ATP + H2O = ADP + phosphate + H(+). Functionally, DNA helicase required for crossover formation, complete synapsis of homologous chromosomes and bivalent formation during meiosis. Is specific to recombination events resulting in interference-sensitive crossovers (class I meiotic crossover). Works cooperatively with ZIP4 to promote crossovers. This Oryza sativa subsp. japonica (Rice) protein is ATP-dependent DNA helicase MER3 homolog.